The chain runs to 314 residues: Short-chain dehydrogenase/reductase sthC (314 aa).

A compositionally biased stretch (polar residues) spans 1–10; that stretch reads MAPAETTGNV. The tract at residues 1-27 is disordered; sequence MAPAETTGNVQRPEAGKQSMGSFWTQM. NADP(+) is bound by residues Val-56, Lys-80, Asp-105, Asn-132, and Arg-167. The active-site Proton donor is Ser-191. NADP(+)-binding residues include Tyr-222 and Lys-226. Catalysis depends on Tyr-222, which acts as the Proton acceptor. Lys-226 serves as the catalytic Lowers pKa of active site Tyr.

Belongs to the short-chain dehydrogenases/reductases (SDR) family.

It carries out the reaction dehydroprobetaenone I + AH2 = probetaenone I + A. It catalyses the reaction betaenone C + AH2 = betaenone B + A. It participates in mycotoxin biosynthesis. Its function is as follows. Short-chain dehydrogenase/reductase; part of the gene cluster that mediates the biosynthesis of the phytotoxin stemphyloxin II. The first step of the pathway is the synthesis of dehydroprobetaenone I by the polyketide synthase sthA and the enoyl reductase sthE via condensation of one acetyl-CoA starter unit with 7 malonyl-CoA units and 5 methylations. The C-terminal reductase (R) domain of sthA catalyzes the reductive release of the polyketide chain. Because sthA lacks a designated enoylreductase (ER) domain, the required activity is provided the enoyl reductase sthE. The short-chain dehydrogenase/reductase sthC then catalyzes reduction of dehydroprobetaenone I to probetaenone I. The cytochrome P450 monooxygenase sthF catalyzes successive epoxidation, oxidation (resulting from epoxide opening) and hydroxylation to install a tertiary alcohol in the decaline ring to yield betaenone C from dehydroprobetaenone I and betaenone B from probetaenone I. The FAD-linked oxidoreductase sthB is responsible for the conversion of betaenone C to betaenone A via an intramolecular aldol reaction between C-1 and C-17 to form the bridged tricyclic system in betaenone A. Finally, the cytochrome P450 monooxygenase sthD catalyzes the hydroxylation of C-15 to afford the final metabolite stemphyloxin II. The chain is Short-chain dehydrogenase/reductase sthC from Phaeosphaeria nodorum (strain SN15 / ATCC MYA-4574 / FGSC 10173) (Glume blotch fungus).